We begin with the raw amino-acid sequence, 167 residues long: Large ribosomal subunit protein uL10 (167 aa).

This sequence belongs to the universal ribosomal protein uL10 family. Part of the ribosomal stalk of the 50S ribosomal subunit. The N-terminus interacts with L11 and the large rRNA to form the base of the stalk. The C-terminus forms an elongated spine to which L12 dimers bind in a sequential fashion forming a multimeric L10(L12)X complex.

In terms of biological role, forms part of the ribosomal stalk, playing a central role in the interaction of the ribosome with GTP-bound translation factors. This chain is Large ribosomal subunit protein uL10, found in Mycoplasma mobile (strain ATCC 43663 / 163K / NCTC 11711) (Mesomycoplasma mobile).